Consider the following 218-residue polypeptide: Adenylate kinase (218 aa).

12–17 (GAGKGT) provides a ligand contact to ATP. An NMP region spans residues 32 to 61 (STGDMLREARSSGTEMGKRVAEVMDRGELV). AMP is bound by residues Thr-33, Arg-38, 59–61 (ELV), 85–88 (GFPR), and Gln-92. The tract at residues 126–164 (GRFTCGNCGEVYHDVTKPTKEPGKCDVCGSTDLRRRADD) is LID. Arg-127 provides a ligand contact to ATP. Zn(2+)-binding residues include Cys-130 and Cys-133. Position 136–137 (136–137 (VY)) interacts with ATP. Residues Cys-150 and Cys-153 each coordinate Zn(2+). 2 residues coordinate AMP: Arg-161 and Arg-172. Residue Ala-200 participates in ATP binding.

This sequence belongs to the adenylate kinase family. Monomer.

It is found in the cytoplasm. The catalysed reaction is AMP + ATP = 2 ADP. The protein operates within purine metabolism; AMP biosynthesis via salvage pathway; AMP from ADP: step 1/1. Functionally, catalyzes the reversible transfer of the terminal phosphate group between ATP and AMP. Plays an important role in cellular energy homeostasis and in adenine nucleotide metabolism. In Paracoccus denitrificans (strain Pd 1222), this protein is Adenylate kinase.